Reading from the N-terminus, the 370-residue chain is 5-hydroxytryptamine receptor 5B (370 aa).

The interval 1–36 (MEVSNLSGATPGIAFPPGPESCSDSPSSGRSMGSTP) is disordered. Over 1 to 48 (MEVSNLSGATPGIAFPPGPESCSDSPSSGRSMGSTPGGLILSGREPPF) the chain is Extracellular. The N-linked (GlcNAc...) asparagine glycan is linked to N5. Residues 20 to 36 (ESCSDSPSSGRSMGSTP) show a composition bias toward low complexity. A helical transmembrane segment spans residues 49–75 (SAFTVLVVTLLVLLIAATFLWNLLVLV). Residues 76-88 (TILRVRAFHRVPH) lie on the Cytoplasmic side of the membrane. A helical transmembrane segment spans residues 89–115 (NLVASTAVSDVLVAALVMPLSLVSELS). Residues 116-127 (AGRRWQLGRSLC) are Extracellular-facing. Cysteines 127 and 205 form a disulfide. The helical transmembrane segment at 128-150 (HVWISFDVLCCTASIWNVAAIAL) threads the bilayer. Position 134 (D134) interacts with serotonin. Residues 151–168 (DRYWTITRHLQYTLRTRR) lie on the Cytoplasmic side of the membrane. The chain crosses the membrane as a helical span at residues 169 to 189 (RASALMIAITWALSALIALAP). The Extracellular segment spans residues 190–211 (LLFGWGEAYDARLQRCQVSQEP). Residues 212 to 233 (SYAVFSTCGAFYVPLAVVLFVY) form a helical membrane-spanning segment. Residues 234-300 (WKIYKAAKFR…QKEKRAAMMV (67 aa)) lie on the Cytoplasmic side of the membrane. A helical transmembrane segment spans residues 301–325 (GILIGVFVLCWIPFFLTELVSPLCA). Residues 326 to 327 (CS) are Extracellular-facing. Residues 328–352 (LPPIWKSIFLWLGYSNSFFNPLIYT) traverse the membrane as a helical segment. Over 353–370 (AFNKNYNNAFKSLFTKQR) the chain is Cytoplasmic.

This sequence belongs to the G-protein coupled receptor 1 family. In terms of tissue distribution, brain; in the CA1 region of hippocampus, the medial habenula, and raphe nuclei.

It is found in the cell membrane. Its function is as follows. G-protein coupled receptor for 5-hydroxytryptamine (serotonin), a biogenic hormone that functions as a neurotransmitter, a hormone and a mitogen. Also functions as a receptor for ergot alkaloid derivatives and other psychoactive substances. Ligand binding causes a conformation change that triggers signaling via guanine nucleotide-binding proteins (G proteins) and modulates the activity of downstream effectors. Htr5b is coupled to G(i)/G(o) G alpha proteins and mediates inhibitory neurotransmission: signaling inhibits adenylate cyclase activity and activates a phosphatidylinositol-calcium second messenger system that regulates the release of Ca(2+) ions from intracellular stores. The sequence is that of 5-hydroxytryptamine receptor 5B from Rattus norvegicus (Rat).